We begin with the raw amino-acid sequence, 71 residues long: ATP synthase subunit c (71 aa).

2 helical membrane-spanning segments follow: residues 4–24 (IAAAIAIMGAAIGAGYGNGQV) and 47–67 (FIGVALVEAVPILGVVIALIL).

The protein belongs to the ATPase C chain family. In terms of assembly, F-type ATPases have 2 components, F(1) - the catalytic core - and F(0) - the membrane proton channel. F(1) has five subunits: alpha(3), beta(3), gamma(1), delta(1), epsilon(1). F(0) has three main subunits: a(1), b(2) and c(10-14). The alpha and beta chains form an alternating ring which encloses part of the gamma chain. F(1) is attached to F(0) by a central stalk formed by the gamma and epsilon chains, while a peripheral stalk is formed by the delta and b chains.

It localises to the cell membrane. In terms of biological role, f(1)F(0) ATP synthase produces ATP from ADP in the presence of a proton or sodium gradient. F-type ATPases consist of two structural domains, F(1) containing the extramembraneous catalytic core and F(0) containing the membrane proton channel, linked together by a central stalk and a peripheral stalk. During catalysis, ATP synthesis in the catalytic domain of F(1) is coupled via a rotary mechanism of the central stalk subunits to proton translocation. Functionally, key component of the F(0) channel; it plays a direct role in translocation across the membrane. A homomeric c-ring of between 10-14 subunits forms the central stalk rotor element with the F(1) delta and epsilon subunits. This chain is ATP synthase subunit c, found in Enterococcus hirae (strain ATCC 9790 / DSM 20160 / JCM 8729 / LMG 6399 / NBRC 3181 / NCIMB 6459 / NCDO 1258 / NCTC 12367 / WDCM 00089 / R).